The primary structure comprises 316 residues: Ribosomal RNA small subunit methyltransferase H (316 aa).

S-adenosyl-L-methionine contacts are provided by residues 35–37 (SGH), aspartate 55, phenylalanine 84, aspartate 105, and glutamine 112.

It belongs to the methyltransferase superfamily. RsmH family.

Its subcellular location is the cytoplasm. It catalyses the reaction cytidine(1402) in 16S rRNA + S-adenosyl-L-methionine = N(4)-methylcytidine(1402) in 16S rRNA + S-adenosyl-L-homocysteine + H(+). Specifically methylates the N4 position of cytidine in position 1402 (C1402) of 16S rRNA. In Streptococcus pyogenes serotype M49 (strain NZ131), this protein is Ribosomal RNA small subunit methyltransferase H.